The primary structure comprises 592 residues: Bifunctional purine biosynthesis protein ATIC (592 aa).

The residue at position 1 (Met1) is an N-acetylmethionine. Residues 2–146 (APGQLALFSV…KNHARVTVVC (145 aa)) enclose the MGS-like domain. Residues 2–198 (APGQLALFSV…ISDYFRKQYS (197 aa)) form an IMP cyclohydrolase region. IMP-binding positions include 12 to 14 (SDK), 34 to 37 (SGGT), 64 to 67 (RVKT), 101 to 102 (CN), and 125 to 126 (DI). Lys137 serves as the catalytic Proton donor/acceptor; for FAICAR cyclization activity. The residue at position 199 (Lys199) is an N6-acetyllysine. An AICAR formyltransferase region spans residues 199–592 (KGVSQMPLRY…AHTNLRLFHH (394 aa)). 5-amino-1-(5-phospho-beta-D-ribosyl)imidazole-4-carboxamide-binding positions include 207 to 208 (RY), His267, Gly316, Asp339, Asn431, and Arg451. The Proton acceptor; for AICAR formyltransferase activity role is filled by His267. Ile452 serves as a coordination point for (6R)-10-formyltetrahydrofolate. Residue Phe541 coordinates 5-amino-1-(5-phospho-beta-D-ribosyl)imidazole-4-carboxamide. (6R)-10-formyltetrahydrofolate contacts are provided by residues Asp546 and 565–566 (SA). Arg588 serves as a coordination point for 5-amino-1-(5-phospho-beta-D-ribosyl)imidazole-4-carboxamide.

This sequence belongs to the PurH family. Homodimer. Associates with internalized INSR complexes on Golgi/endosomal membranes. Interacts with INSR; ATIC together with PRKAA2/AMPK2 and HACD3/PTPLAD1 is proposed to be part of a signaling network regulating INSR autophosphorylation and endocytosis. As to expression, present in the heart, brain, placenta, lung, liver, skeletal muscle, kidney, pancreas.

The protein localises to the cytoplasm. It localises to the cytosol. It catalyses the reaction (6R)-10-formyltetrahydrofolate + 5-amino-1-(5-phospho-beta-D-ribosyl)imidazole-4-carboxamide = 5-formamido-1-(5-phospho-D-ribosyl)imidazole-4-carboxamide + (6S)-5,6,7,8-tetrahydrofolate. It carries out the reaction 10-formyldihydrofolate + 5-amino-1-(5-phospho-beta-D-ribosyl)imidazole-4-carboxamide = 5-formamido-1-(5-phospho-D-ribosyl)imidazole-4-carboxamide + 7,8-dihydrofolate. The catalysed reaction is IMP + H2O = 5-formamido-1-(5-phospho-D-ribosyl)imidazole-4-carboxamide. The enzyme catalyses 5-amino-1-(5-phospho-D-ribosyl)imidazole-4-thiocarboxamide + 10-formyldihydrofolate = 6-thio-IMP + 7,8-dihydrofolate + H2O. The protein operates within purine metabolism; IMP biosynthesis via de novo pathway; 5-formamido-1-(5-phospho-D-ribosyl)imidazole-4-carboxamide from 5-amino-1-(5-phospho-D-ribosyl)imidazole-4-carboxamide (10-formyl THF route): step 1/1. It participates in purine metabolism; IMP biosynthesis via de novo pathway; IMP from 5-formamido-1-(5-phospho-D-ribosyl)imidazole-4-carboxamide: step 1/1. AMP and XMP inhibit AICAR formyltransferase activity. AICAR formyltransferase activity is inhibited by N-(6-fluoro-1-oxo-1,2-dihydroisoquinolin-7-yl)-5- [(3R)-3-hydroxypyrrolidin-1-yl]thiophene-2-sulfonamide (LSN 3213128), which acts as a tumor suppression in cancer cell lines. Bifunctional enzyme that catalyzes the last two steps of purine biosynthesis. Acts as a transformylase that incorporates a formyl group to the AMP analog AICAR (5-amino-1-(5-phospho-beta-D-ribosyl)imidazole-4-carboxamide) to produce the intermediate formyl-AICAR (FAICAR). Can use both 10-formyldihydrofolate and 10-formyltetrahydrofolate as the formyl donor in this reaction. Also catalyzes the cyclization of FAICAR to inosine monophosphate (IMP). Is able to convert thio-AICAR to 6-mercaptopurine ribonucleotide, an inhibitor of purine biosynthesis used in the treatment of human leukemias. Promotes insulin receptor/INSR autophosphorylation and is involved in INSR internalization. The sequence is that of Bifunctional purine biosynthesis protein ATIC from Homo sapiens (Human).